We begin with the raw amino-acid sequence, 784 residues long: LPS-assembly protein LptD (784 aa).

A signal peptide spans 1–24; it reads MKKRIPTLLATMIATALYSQQGLA. Cystine bridges form between Cys31–Cys724 and Cys173–Cys725.

It belongs to the LptD family. As to quaternary structure, component of the lipopolysaccharide transport and assembly complex. Interacts with LptE and LptA. Contains two intramolecular disulfide bonds.

It localises to the cell outer membrane. Its function is as follows. Together with LptE, is involved in the assembly of lipopolysaccharide (LPS) at the surface of the outer membrane. The protein is LPS-assembly protein LptD of Shigella sonnei (strain Ss046).